Consider the following 120-residue polypeptide: UPF0342 protein Csac_0863 (120 aa).

It belongs to the UPF0342 family.

The chain is UPF0342 protein Csac_0863 from Caldicellulosiruptor saccharolyticus (strain ATCC 43494 / DSM 8903 / Tp8T 6331).